The chain runs to 225 residues: UPF0758 protein Shewmr4_3597 (225 aa).

The 123-residue stretch at 102-224 (VLTNPDLTRD…IVSFAERGWI (123 aa)) folds into the MPN domain. The Zn(2+) site is built by His173, His175, and Asp186. Residues 173-186 (HNHPSGIAEPSQAD) carry the JAMM motif motif.

Belongs to the UPF0758 family.

The polypeptide is UPF0758 protein Shewmr4_3597 (Shewanella sp. (strain MR-4)).